The primary structure comprises 162 residues: Regulator of sigma D (162 aa).

The protein belongs to the Rsd/AlgQ family. In terms of assembly, interacts with RpoD.

It is found in the cytoplasm. Its function is as follows. Binds RpoD and negatively regulates RpoD-mediated transcription activation by preventing the interaction between the primary sigma factor RpoD with the catalytic core of the RNA polymerase and with promoter DNA. May be involved in replacement of the RNA polymerase sigma subunit from RpoD to RpoS during the transition from exponential growth to the stationary phase. The sequence is that of Regulator of sigma D from Salmonella paratyphi A (strain ATCC 9150 / SARB42).